Consider the following 251-residue polypeptide: Triosephosphate isomerase (251 aa).

12–14 is a binding site for substrate; that stretch reads NWK. Histidine 99 functions as the Electrophile in the catalytic mechanism. Glutamate 169 acts as the Proton acceptor in catalysis. Substrate contacts are provided by residues glycine 175, serine 214, and 235-236; that span reads GG.

Belongs to the triosephosphate isomerase family. In terms of assembly, homodimer.

It is found in the cytoplasm. The enzyme catalyses D-glyceraldehyde 3-phosphate = dihydroxyacetone phosphate. It participates in carbohydrate biosynthesis; gluconeogenesis. Its pathway is carbohydrate degradation; glycolysis; D-glyceraldehyde 3-phosphate from glycerone phosphate: step 1/1. Involved in the gluconeogenesis. Catalyzes stereospecifically the conversion of dihydroxyacetone phosphate (DHAP) to D-glyceraldehyde-3-phosphate (G3P). The protein is Triosephosphate isomerase of Bradyrhizobium sp. (strain BTAi1 / ATCC BAA-1182).